Here is a 915-residue protein sequence, read N- to C-terminus: Coronin-7 (915 aa).

WD repeat units lie at residues cysteine 75–proline 115, proline 124–glutamate 163, threonine 166–glutamine 205, and alanine 209–threonine 253. Residues threonine 396–serine 456 are disordered. Low complexity-rich tracts occupy residues leucine 399–alanine 413 and serine 420–serine 450. Phosphoserine occurs at positions 453 and 456. A Glycyl lysine isopeptide (Lys-Gly) (interchain with G-Cter in ubiquitin) cross-link involves residue lysine 463. 4 WD repeats span residues glutamine 533–valine 573, glycine 583–arginine 623, glycine 626–glutamine 665, and aspartate 719–leucine 759. The disordered stretch occupies residues proline 850–aspartate 915. Residues alanine 859–proline 869 are compositionally biased toward low complexity. Basic and acidic residues predominate over residues leucine 874–leucine 886. Serine 905 carries the post-translational modification Phosphoserine.

Belongs to the WD repeat coronin family. In terms of assembly, interacts with clathrin adapter AP1 complex. This interaction takes place at Golgi membranes and not AP1-positive endosomal membranes. Interacts (when ubiquitinated at Lys-463) with EPS15. The membrane-associated form is phosphorylated on tyrosine residues. In terms of processing, ubiquitinated via 'Lys-33'-linked ubiquitin chains by the BCR(KLHL20) E3 ubiquitin ligase complex: 'Lys-33'-linked ubiquitination promotes interaction with EPS15 and facilitates actin polymerization at the trans-Golgi network, thereby facilitating post-Golgi trafficking. Deubiquitinated by ZRANB1/TRABID.

Its subcellular location is the golgi apparatus membrane. The protein localises to the golgi apparatus. It localises to the trans-Golgi network. The protein resides in the cytoplasmic vesicle. It is found in the cytoplasm. Its subcellular location is the cytosol. Functionally, F-actin regulator involved in anterograde Golgi to endosome transport: upon ubiquitination via 'Lys-33'-linked ubiquitin chains by the BCR(KLHL20) E3 ubiquitin ligase complex, interacts with EPS15 and localizes to the trans-Golgi network, where it promotes actin polymerization, thereby facilitating post-Golgi trafficking. May play a role in the maintenance of the Golgi apparatus morphology. The protein is Coronin-7 (CORO7) of Bos taurus (Bovine).